We begin with the raw amino-acid sequence, 309 residues long: Taste receptor type 2 member 46 (309 aa).

Met-1 is a topological domain (extracellular). A helical membrane pass occupies residues 2-22 (ITFLPIIFSILIVVTFVIGNF). Over 23 to 46 (ANGFIALANSIEWFKRQKISFADQ) the chain is Cytoplasmic. The chain crosses the membrane as a helical span at residues 47–67 (ILTALAVSRVGLLWVLLLNWY). The Extracellular segment spans residues 68-86 (ATELNPAFYSIEVRITAYN). Residues 87–107 (LWAVINHFSNWLATSLSIFYL) traverse the membrane as a helical segment. Over 108-126 (LKIANFSNLIFLCLKRRVK) the chain is Cytoplasmic. A helical transmembrane segment spans residues 127 to 147 (SVVLVILLGPLLFLVCHLFVI). The Extracellular segment spans residues 148–178 (NMNQIIWTKEYEGNMTWKIKLRSAMYLSNTT). Residues Asn-161 and Asn-176 are each glycosylated (N-linked (GlcNAc...) asparagine). Residues 179–199 (VTILANLVPFTLTLISFLLLI) traverse the membrane as a helical segment. Residues 200 to 229 (CSLCKHLEKMQLHGKGSQDPSMKVHIKALQ) lie on the Cytoplasmic side of the membrane. Residues 230–250 (TVTSFLLLCAIYFLSIIMSVW) traverse the membrane as a helical segment. The Extracellular segment spans residues 251-259 (SFESLENKP). The helical transmembrane segment at 260–280 (VFMFCEAITFSYPSTHPFILI) threads the bilayer. The Cytoplasmic portion of the chain corresponds to 281-309 (WGNKKLKQTFLSVLWHVRYWVKGEKPSXP).

Belongs to the G-protein coupled receptor T2R family.

Its subcellular location is the membrane. The protein localises to the cell projection. It localises to the cilium membrane. Functionally, receptor that may play a role in the perception of bitterness and is gustducin-linked. May play a role in sensing the chemical composition of the gastrointestinal content. The activity of this receptor may stimulate alpha gustducin, mediate PLC-beta-2 activation and lead to the gating of TRPM5. In airway epithelial cells, binding of bitter compounds increases the intracellular calcium ion concentration and stimulates ciliary beat frequency. This Pan troglodytes (Chimpanzee) protein is Taste receptor type 2 member 46 (TAS2R46).